The primary structure comprises 179 residues: Natural killer cells antigen CD94 (179 aa).

At 1–10 (MAVFKTTLWW) the chain is on the cytoplasmic side. The chain crosses the membrane as a helical; Signal-anchor for type II membrane protein span at residues 11–31 (LISGTLGIICLSLTATLGILL). Topologically, residues 32–179 (KNSFTKLSIE…NRYICKQQLI (148 aa)) are extracellular. 2 cysteine pairs are disulfide-bonded: C58–C70 and C61–C72. The 108-residue stretch at 68–175 (YRCNCYFISS…CEDKNRYICK (108 aa)) folds into the C-type lectin domain. N83 and N132 each carry an N-linked (GlcNAc...) asparagine glycan. 2 cysteine pairs are disulfide-bonded: C89/C174 and C152/C166.

Can form disulfide-bonded heterodimer with NKG2 family members KLRC1 and KLRC2. KLRD1-KLRC1 heterodimer interacts with peptide-bound MHC-E-B2M heterotrimeric complex. KLRD1 plays a prominent role in directly interacting with MHC-E. KLRD1-KLRC1 interacts with much higher affinity with peptide-bound MHC-E-B2M than KLRD1-KLRC2. Interacts with the adapter protein TYROBP/DAP12; this interaction is required for cell surface expression and cell activation. As to expression, natural killer cells.

It localises to the cell membrane. Functionally, immune receptor involved in self-nonself discrimination. In complex with KLRC1 or KLRC2 on cytotoxic and regulatory lymphocyte subsets, recognizes non-classical major histocompatibility (MHC) class Ib molecule MHC-E loaded with self-peptides derived from the signal sequence of classical MHC class Ia and non-classical MHC class Ib molecules. Enables cytotoxic cells to monitor the expression of MHC class I molecules in healthy cells and to tolerate self. Primarily functions as a ligand binding subunit as it lacks the capacity to signal. Its function is as follows. KLRD1-KLRC1 acts as an immune inhibitory receptor. Key inhibitory receptor on natural killer (NK) cells that regulates their activation and effector functions. Dominantly counteracts T cell receptor signaling on a subset of memory/effector CD8-positive T cells as part of an antigen-driven response to avoid autoimmunity. On intraepithelial CD8-positive gamma-delta regulatory T cells triggers TGFB1 secretion, which in turn limits the cytotoxic programming of intraepithelial CD8-positive alpha-beta T cells, distinguishing harmless from pathogenic antigens. In MHC-E-rich tumor microenvironment, acts as an immune inhibitory checkpoint and may contribute to progressive loss of effector functions of NK cells and tumor-specific T cells, a state known as cell exhaustion. Upon MHC-E-peptide binding, transmits intracellular signals through KLRC1 immunoreceptor tyrosine-based inhibition motifs (ITIMs) by recruiting INPP5D/SHIP-1 and INPPL1/SHIP-2 tyrosine phosphatases to ITIMs, and ultimately opposing signals transmitted by activating receptors through dephosphorylation of proximal signaling molecules. In terms of biological role, KLRD1-KLRC2 acts as an immune activating receptor. On cytotoxic lymphocyte subsets recognizes MHC-E loaded with signal sequence-derived peptides from non-classical MHC class Ib MHC-G molecules, likely playing a role in the generation and effector functions of adaptive NK cells and in maternal-fetal tolerance during pregnancy. Regulates the effector functions of terminally differentiated cytotoxic lymphocyte subsets, and in particular may play a role in adaptive NK cell response to viral infection. Upon MHC-E-peptide binding, transmits intracellular signals via the adapter protein TYROBP/DAP12, triggering the phosphorylation of proximal signaling molecules and cell activation. This is Natural killer cells antigen CD94 (KLRD1) from Pongo pygmaeus (Bornean orangutan).